Reading from the N-terminus, the 114-residue chain is Kininogen-2 (114 aa).

Residues 1–23 form the signal peptide; sequence MRLWFCLSFFIVLCLEHFPGTLA. The segment covering 35–45 has biased composition (basic residues); the sequence is TRLHGHHKPSR. A disordered region spans residues 35–114; the sequence is TRLHGHHKPS…QIPGLGPLRG (80 aa). Positions 65-80 are enriched in basic and acidic residues; it reads PESEEKTEQFLRDLPK. Arg-113 is subject to Arginine amide.

This sequence belongs to the bradykinin-related peptide family. In terms of tissue distribution, expressed by the skin glands.

It localises to the secreted. Its function is as follows. Potent vasodilator. Binds B1 (BDKRB1) and B2 (BDKRB2) bradykinin receptors. The chain is Kininogen-2 from Bombina maxima (Giant fire-bellied toad).